Reading from the N-terminus, the 382-residue chain is MGNSSEEPKPPTKSDKPSSPPVDQTNVHVYPDWAAMQAYYGPRVAMPPYYNSAMAASGHPPPPYMWNPQHMMSPYGAPYAAVYPHGGGVYAHPGIPMGSLPQGQKDPPLTTPGTLLSIDTPTKSTGNTDNGLMKKLKEFDGLAMSLGNGNPENGADEHKRSRNSSETDGSTDGSDGNTTGADEPKLKRSREGTPTKDGKQLVQASSFHSVSPSSGDTGVKLIQGSGAILSPGVSANSNPFMSQSLAMVPPETWLQNERELKRERRKQSNRESARRSRLRKQAETEELARKVEALTAENMALRSELNQLNEKSDKLRGANATLLDKLKCSEPEKRVPANMLSRVKNSGAGDKNKNQGDNDSNSTSKLHQLLDTKPRAKAVAAG.

Positions 1-16 (MGNSSEEPKPPTKSDK) are enriched in basic and acidic residues. Disordered regions lie at residues 1–26 (MGNSSEEPKPPTKSDKPSSPPVDQTN), 97–221 (MGSL…GVKL), and 257–285 (ERELKRERRKQSNRESARRSRLRKQAETE). Over residues 111–130 (TPGTLLSIDTPTKSTGNTDN) the composition is skewed to polar residues. Over residues 155-165 (ADEHKRSRNSS) the composition is skewed to basic and acidic residues. Residues 166–181 (ETDGSTDGSDGNTTGA) show a composition bias toward low complexity. A compositionally biased stretch (basic and acidic residues) spans 182 to 199 (DEPKLKRSREGTPTKDGK). Residues 202–216 (VQASSFHSVSPSSGD) are compositionally biased toward polar residues. A bZIP domain is found at 259–322 (ELKRERRKQS…DKLRGANATL (64 aa)). The basic motif stretch occupies residues 261 to 280 (KRERRKQSNRESARRSRLRK). Positions 287-322 (LARKVEALTAENMALRSELNQLNEKSDKLRGANATL) are leucine-zipper. Residues 329-382 (SEPEKRVPANMLSRVKNSGAGDKNKNQGDNDSNSTSKLHQLLDTKPRAKAVAAG) form a disordered region. Residues 357-366 (DNDSNSTSKL) are compositionally biased toward polar residues.

Belongs to the bZIP family. In terms of assembly, DNA-binding heterodimer. Interacts with GBF4. Interacts with BZIP16 and BZIP68. Present only in dark grown leaves and roots.

It is found in the nucleus. Its function is as follows. Binds to the G-box motif (5'-CCACGTGG-3') of the rbcS-1A gene promoter. G-box and G-box-like motifs are cis-acting elements defined in promoters of certain plant genes which are regulated by such diverse stimuli as light-induction or hormone control. The sequence is that of G-box-binding factor 3 (GBF3) from Arabidopsis thaliana (Mouse-ear cress).